We begin with the raw amino-acid sequence, 252 residues long: Accessory gland protein Acp32CD (252 aa).

The first 19 residues, 1–19 (MWRMRMRLLTGYLVLLALG), serve as a signal peptide directing secretion. Residues 42-252 (PDGEGGTGVD…GAKEDDYEEM (211 aa)) form a disordered region. Residues 44–69 (GEGGTGVDGGGGGAGGGAAGPGGGTG) show a composition bias toward gly residues. Basic and acidic residues-rich tracts occupy residues 104–122 (AIGK…DSKD), 142–153 (SDSKDAKDRQDK), 159–171 (QEGK…HHSS), and 209–225 (NGAR…KEVA).

In terms of tissue distribution, seminal fluid.

It is found in the secreted. Functionally, responsible for physiological and behavioral changes in mated female flies. The protein is Accessory gland protein Acp32CD (Acp32CD) of Drosophila melanogaster (Fruit fly).